Consider the following 467-residue polypeptide: UDP-N-acetylmuramate--L-alanine ligase (467 aa).

Glycine 114 to threonine 120 contacts ATP.

It belongs to the MurCDEF family.

It localises to the cytoplasm. It carries out the reaction UDP-N-acetyl-alpha-D-muramate + L-alanine + ATP = UDP-N-acetyl-alpha-D-muramoyl-L-alanine + ADP + phosphate + H(+). It functions in the pathway cell wall biogenesis; peptidoglycan biosynthesis. Its function is as follows. Cell wall formation. This chain is UDP-N-acetylmuramate--L-alanine ligase, found in Bradyrhizobium diazoefficiens (strain JCM 10833 / BCRC 13528 / IAM 13628 / NBRC 14792 / USDA 110).